The primary structure comprises 396 residues: Mannonate dehydratase (396 aa).

It belongs to the mannonate dehydratase family. The cofactor is Fe(2+). It depends on Mn(2+) as a cofactor.

The enzyme catalyses D-mannonate = 2-dehydro-3-deoxy-D-gluconate + H2O. Its pathway is carbohydrate metabolism; pentose and glucuronate interconversion. Its function is as follows. Catalyzes the dehydration of D-mannonate. The sequence is that of Mannonate dehydratase from Yersinia enterocolitica serotype O:8 / biotype 1B (strain NCTC 13174 / 8081).